Consider the following 184-residue polypeptide: Dual specificity protein phosphatase 22 (184 aa).

A lipid anchor (N-myristoyl glycine) is attached at Gly-2. The 141-residue stretch at 4-144 (GMNKILPGLY…LQEFEKHEVH (141 aa)) folds into the Tyrosine-protein phosphatase domain. Ser-58 is subject to Phosphoserine. Cys-88 functions as the Phosphocysteine intermediate in the catalytic mechanism. The a protein site is built by Leu-89, Ala-90, Val-92, Ser-93, and Arg-94.

It belongs to the protein-tyrosine phosphatase family. Non-receptor class dual specificity subfamily. Monomer. Interacts with LCK; the interaction is direct. Interacts with UBR2; the interaction is direct. In terms of processing, myristoylation regulates subcellular location, and is necessary for activation of JNK. In terms of tissue distribution, ubiquitous. Highest expression seen in heart, placenta, lung, liver, kidney and pancreas.

The protein localises to the cytoplasm. It carries out the reaction O-phospho-L-tyrosyl-[protein] + H2O = L-tyrosyl-[protein] + phosphate. The enzyme catalyses O-phospho-L-seryl-[protein] + H2O = L-seryl-[protein] + phosphate. It catalyses the reaction O-phospho-L-threonyl-[protein] + H2O = L-threonyl-[protein] + phosphate. In terms of biological role, dual specificity phosphatase; can dephosphorylate both phosphotyrosine and phosphoserine or phosphothreonine residues. Activates the JNK signaling pathway. Inhibits T-cell receptor signaling and T-cell mediated immune responses, acting, at least in part, by inducing degradation of E3 ubiquitin ligase UBR2. Dephosphorylates and thereby induces 'Lys-48'-linked ubiquitination of UBR2, leading to proteasomal degradation of UBR2. Dephosphorylates and thereby inactivates tyrosine kinase LCK. Inhibits UBR2-mediated 'Lys-63'-linked ubiquitination of LCK. May play a role in B-cell receptor (BCR) signaling and B-cell function. The chain is Dual specificity protein phosphatase 22 (DUSP22) from Homo sapiens (Human).